The primary structure comprises 84 residues: Small ribosomal subunit protein uS17 (84 aa).

The protein belongs to the universal ribosomal protein uS17 family. Part of the 30S ribosomal subunit.

Its function is as follows. One of the primary rRNA binding proteins, it binds specifically to the 5'-end of 16S ribosomal RNA. This chain is Small ribosomal subunit protein uS17, found in Alkaliphilus metalliredigens (strain QYMF).